The following is a 338-amino-acid chain: Tetraacyldisaccharide 4'-kinase (338 aa).

49–56 (TVGGTGKT) is a binding site for ATP.

The protein belongs to the LpxK family.

The catalysed reaction is a lipid A disaccharide + ATP = a lipid IVA + ADP + H(+). The protein operates within glycolipid biosynthesis; lipid IV(A) biosynthesis; lipid IV(A) from (3R)-3-hydroxytetradecanoyl-[acyl-carrier-protein] and UDP-N-acetyl-alpha-D-glucosamine: step 6/6. Transfers the gamma-phosphate of ATP to the 4'-position of a tetraacyldisaccharide 1-phosphate intermediate (termed DS-1-P) to form tetraacyldisaccharide 1,4'-bis-phosphate (lipid IVA). This Geobacter metallireducens (strain ATCC 53774 / DSM 7210 / GS-15) protein is Tetraacyldisaccharide 4'-kinase.